The sequence spans 639 residues: NADP-dependent malic enzyme, chloroplastic (639 aa).

The N-terminal 49 residues, 1–49 (MLSARAAATAAAAAASPLWKRGEGGSSGSGSGCTSCREVRRRAAAVRVR), are a transit peptide targeting the chloroplast. The segment at 15 to 34 (ASPLWKRGEGGSSGSGSGCT) is disordered. Tyrosine 187 acts as the Proton donor in catalysis. Arginine 240 is a binding site for NAD(+). The Proton acceptor role is filled by lysine 258. The a divalent metal cation site is built by glutamate 330, aspartate 331, and aspartate 354. Aspartate 354 contacts NAD(+). Position 383–399 (383–399 (LFLGAGEAGTGIAELIA)) interacts with NADP(+). Residue asparagine 495 participates in NAD(+) binding.

The protein belongs to the malic enzymes family. As to quaternary structure, homotetramer. It depends on Mg(2+) as a cofactor. Mn(2+) is required as a cofactor.

It localises to the plastid. The protein localises to the chloroplast. The catalysed reaction is (S)-malate + NADP(+) = pyruvate + CO2 + NADPH. It carries out the reaction oxaloacetate + H(+) = pyruvate + CO2. It functions in the pathway photosynthesis; C4 acid pathway. Functionally, the chloroplastic ME isoform decarboxylates malate shuttled from neighboring mesophyll cells. The CO(2) released is then refixed by ribulose-bisphosphate carboxylase. This pathway eliminates the photorespiratory loss of CO(2) that occurs in most plants. This is NADP-dependent malic enzyme, chloroplastic (ME6) from Oryza sativa subsp. japonica (Rice).